Reading from the N-terminus, the 230-residue chain is Cytidylate kinase (230 aa).

An ATP-binding site is contributed by 10-18 (GFSSTGKST).

It belongs to the cytidylate kinase family. Type 1 subfamily.

It is found in the cytoplasm. The enzyme catalyses CMP + ATP = CDP + ADP. It catalyses the reaction dCMP + ATP = dCDP + ADP. This is Cytidylate kinase from Flavobacterium johnsoniae (strain ATCC 17061 / DSM 2064 / JCM 8514 / BCRC 14874 / CCUG 350202 / NBRC 14942 / NCIMB 11054 / UW101) (Cytophaga johnsonae).